We begin with the raw amino-acid sequence, 315 residues long: Cyclin-dependent kinase B2-2 (315 aa).

The Protein kinase domain maps to 16–306; that stretch reads FEKLEKVGEG…AKKAMEHPYF (291 aa). ATP is bound by residues 22–30 and lysine 45; that span reads VGEGTYGKV. At tyrosine 27 the chain carries Phosphotyrosine. The active-site Proton acceptor is aspartate 147. Residue threonine 181 is modified to Phosphothreonine.

The protein belongs to the protein kinase superfamily. CMGC Ser/Thr protein kinase family. CDC2/CDKX subfamily. In terms of tissue distribution, expressed in flowers.

It catalyses the reaction L-seryl-[protein] + ATP = O-phospho-L-seryl-[protein] + ADP + H(+). It carries out the reaction L-threonyl-[protein] + ATP = O-phospho-L-threonyl-[protein] + ADP + H(+). The catalysed reaction is [DNA-directed RNA polymerase] + ATP = phospho-[DNA-directed RNA polymerase] + ADP + H(+). The protein is Cyclin-dependent kinase B2-2 (CDKB2-2) of Arabidopsis thaliana (Mouse-ear cress).